A 284-amino-acid chain; its full sequence is Transcription factor lir-3 (284 aa).

Basic and acidic residues predominate over residues 50 to 60 (EPRISRDELRE). Residues 50–71 (EPRISRDELRETASSPVTFETR) are disordered. Residues 224 to 247 (YKCKQCDYLDYRKSTMRKHTVSQH) form a C2H2-type zinc finger.

As to expression, expressed in FLP neurons.

It is found in the nucleus. In terms of biological role, positively regulates the RNA polymerase III-associated transcription of small non-coding RNAs. This is Transcription factor lir-3 from Caenorhabditis elegans.